The sequence spans 472 residues: Serine/threonine-protein kinase sax-1 (472 aa).

The region spanning 87-381 (FESLKVIGRG…LDEIKQCPFF (295 aa)) is the Protein kinase domain. Residues 93 to 101 (IGRGAFGEV) and K116 contribute to the ATP site. The Proton acceptor role is filled by D210. In terms of domain architecture, AGC-kinase C-terminal spans 382-452 (RRIDWNHIRE…KRFDGLTQKM (71 aa)).

Belongs to the protein kinase superfamily. AGC Ser/Thr protein kinase family. Requires Mg(2+) as cofactor.

It is found in the cytoplasm. It localises to the nucleus. It catalyses the reaction L-seryl-[protein] + ATP = O-phospho-L-seryl-[protein] + ADP + H(+). The enzyme catalyses L-threonyl-[protein] + ATP = O-phospho-L-threonyl-[protein] + ADP + H(+). Acts with sax-2 to restrict the growth of both primary and secondary neurites. Regulates mechanosensory tiling by controlling the termination point of sensory dendrites. The chain is Serine/threonine-protein kinase sax-1 from Caenorhabditis briggsae.